We begin with the raw amino-acid sequence, 152 residues long: Large ribosomal subunit protein bL9 (152 aa).

This sequence belongs to the bacterial ribosomal protein bL9 family.

In terms of biological role, binds to the 23S rRNA. In Synechococcus sp. (strain CC9902), this protein is Large ribosomal subunit protein bL9.